The primary structure comprises 741 residues: Chromosome transmission fidelity protein 18 (741 aa).

183–190 (GPPGIGKT) is a binding site for ATP.

This sequence belongs to the activator 1 small subunits family. CTF18 subfamily. Component of the CTF18-RFC complex, which consists of CTF18, CTF8, DCC1, RFC2, RFC3, RFC4 and RFC5. CTF18 interacts with ECO1.

Its subcellular location is the nucleus. In terms of biological role, essential for the fidelity of chromosome transmission. Required for the DNA replication block checkpoint. Component of the RFC-like complex CTF18-RFC which is required for efficient establishment of chromosome cohesion during S-phase and may load or unload POL30/PCNA. During a clamp loading circle, the RFC:clamp complex binds to DNA and the recognition of the double-stranded/single-stranded junction stimulates ATP hydrolysis by RFC. The complex presumably provides bipartite ATP sites in which one subunit supplies a catalytic site for hydrolysis of ATP bound to the neighboring subunit. Dissociation of RFC from the clamp leaves the clamp encircling DNA. This Saccharomyces cerevisiae (strain ATCC 204508 / S288c) (Baker's yeast) protein is Chromosome transmission fidelity protein 18 (CTF18).